We begin with the raw amino-acid sequence, 154 residues long: Aspartate carbamoyltransferase regulatory chain (154 aa).

Residues C109, C114, C138, and C141 each contribute to the Zn(2+) site.

Belongs to the PyrI family. As to quaternary structure, contains catalytic and regulatory chains. Zn(2+) is required as a cofactor.

Its function is as follows. Involved in allosteric regulation of aspartate carbamoyltransferase. The sequence is that of Aspartate carbamoyltransferase regulatory chain from Photorhabdus laumondii subsp. laumondii (strain DSM 15139 / CIP 105565 / TT01) (Photorhabdus luminescens subsp. laumondii).